Reading from the N-terminus, the 127-residue chain is Small ribosomal subunit protein uS13 (127 aa).

A disordered region spans residues 93-127; the sequence is RRSLPVRGQRTHTNARTRKGPRKGTVANKKKATAK.

It belongs to the universal ribosomal protein uS13 family. In terms of assembly, part of the 30S ribosomal subunit. Forms a loose heterodimer with protein S19. Forms two bridges to the 50S subunit in the 70S ribosome.

In terms of biological role, located at the top of the head of the 30S subunit, it contacts several helices of the 16S rRNA. In the 70S ribosome it contacts the 23S rRNA (bridge B1a) and protein L5 of the 50S subunit (bridge B1b), connecting the 2 subunits; these bridges are implicated in subunit movement. Contacts the tRNAs in the A and P-sites. This chain is Small ribosomal subunit protein uS13, found in Koribacter versatilis (strain Ellin345).